The primary structure comprises 126 residues: MKALALIAHDAKKDEMVAFCLRHKDVLARYPLLATGTTGARIQEATGLAVERVLSGPLGGDLQIGARVAEGKVLAVVFLQDPLTAKPHEPDVQALMRVCNVHGVPLATNLVAAEALIAWIRKGTPQ.

Positions 1 to 126 (MKALALIAHD…IAWIRKGTPQ (126 aa)) constitute an MGS-like domain. Residues H9, K13, 35–38 (TGTT), and 55–56 (SG) each bind substrate. D61 functions as the Proton donor/acceptor in the catalytic mechanism. Residue H88 coordinates substrate.

It belongs to the methylglyoxal synthase family.

It carries out the reaction dihydroxyacetone phosphate = methylglyoxal + phosphate. Its function is as follows. Catalyzes the formation of methylglyoxal from dihydroxyacetone phosphate. The polypeptide is Methylglyoxal synthase (Thermus thermophilus (strain ATCC BAA-163 / DSM 7039 / HB27)).